Consider the following 169-residue polypeptide: Lipoprotein signal peptidase (169 aa).

4 helical membrane-spanning segments follow: residues 4–24, 29–49, 70–90, and 101–121; these read PICS…ILDI, WVMA…FNLT, WFFA…MYRS, and YALI…HGAV. Residues aspartate 123 and aspartate 141 contribute to the active site. The chain crosses the membrane as a helical span at residues 137–157; it reads FNLADVAICIGAALVIFEGFL.

It belongs to the peptidase A8 family.

The protein resides in the cell inner membrane. It carries out the reaction Release of signal peptides from bacterial membrane prolipoproteins. Hydrolyzes -Xaa-Yaa-Zaa-|-(S,diacylglyceryl)Cys-, in which Xaa is hydrophobic (preferably Leu), and Yaa (Ala or Ser) and Zaa (Gly or Ala) have small, neutral side chains.. The protein operates within protein modification; lipoprotein biosynthesis (signal peptide cleavage). Functionally, this protein specifically catalyzes the removal of signal peptides from prolipoproteins. This chain is Lipoprotein signal peptidase, found in Yersinia pestis bv. Antiqua (strain Antiqua).